An 854-amino-acid chain; its full sequence is DNA mismatch repair protein MutS (854 aa).

ATP is bound at residue 615–622 (GPNMGGKS).

This sequence belongs to the DNA mismatch repair MutS family.

Its function is as follows. This protein is involved in the repair of mismatches in DNA. It is possible that it carries out the mismatch recognition step. This protein has a weak ATPase activity. This Aliivibrio fischeri (strain MJ11) (Vibrio fischeri) protein is DNA mismatch repair protein MutS.